Consider the following 247-residue polypeptide: MNEKIAILSAYSFVNIEEPANLIPKLLLLGKRKYIRGTILLANEGFNGSFSGSYENVNLVLEELIKLTGPKDVNVKINYSDVHPFQKLKVRLKKEIIAMNVDDLNVDLFKGEYIEPKDWDEFITKQDVIVIDTRNDYEVEVGTFKSAINPNTKTFKQFPAWVQQNQELLKGKKIAMVCTGGIRCEKSTSLLKSIGYNEVYHLKGGILQYLEDTQNKNNLWQGECFVFDDRRAVTDDLSPVERHWLQR.

A Rhodanese domain is found at 124 to 218; it reads TKQDVIVIDT…YLEDTQNKNN (95 aa). Cysteine 178 (cysteine persulfide intermediate) is an active-site residue.

Belongs to the TrhO family.

The catalysed reaction is uridine(34) in tRNA + AH2 + O2 = 5-hydroxyuridine(34) in tRNA + A + H2O. In terms of biological role, catalyzes oxygen-dependent 5-hydroxyuridine (ho5U) modification at position 34 in tRNAs. This Rickettsia rickettsii (strain Iowa) protein is tRNA uridine(34) hydroxylase.